The following is a 171-amino-acid chain: Large ribosomal subunit protein uL10 (171 aa).

This sequence belongs to the universal ribosomal protein uL10 family. In terms of assembly, part of the ribosomal stalk of the 50S ribosomal subunit. The N-terminus interacts with L11 and the large rRNA to form the base of the stalk. The C-terminus forms an elongated spine to which L12 dimers bind in a sequential fashion forming a multimeric L10(L12)X complex.

In terms of biological role, forms part of the ribosomal stalk, playing a central role in the interaction of the ribosome with GTP-bound translation factors. The protein is Large ribosomal subunit protein uL10 (rplJ) of Lactococcus lactis subsp. lactis (strain IL1403) (Streptococcus lactis).